Consider the following 488-residue polypeptide: NADH-quinone oxidoreductase subunit N 2 (488 aa).

14 helical membrane-spanning segments follow: residues 18 to 38 (FLPE…ELFI), 45 to 65 (LVLN…LLIP), 81 to 101 (PLAV…LPFA), 110 to 130 (SFYG…FVLA), 135 to 155 (LIIL…LTAL), 169 to 189 (YLIL…FMYI), 210 to 230 (LVLG…AVPF), 242 to 262 (PTPV…IPLV), 274 to 294 (LVWT…GNLV), 308 to 328 (SSIA…VIGM), 331 to 351 (VIYF…VLAL), 375 to 395 (IAFA…TVGF), 412 to 434 (WLAF…LVVV), and 458 to 478 (FALT…WFLI).

It belongs to the complex I subunit 2 family. NDH-1 is composed of 14 different subunits. Subunits NuoA, H, J, K, L, M, N constitute the membrane sector of the complex.

It localises to the cell inner membrane. The catalysed reaction is a quinone + NADH + 5 H(+)(in) = a quinol + NAD(+) + 4 H(+)(out). In terms of biological role, NDH-1 shuttles electrons from NADH, via FMN and iron-sulfur (Fe-S) centers, to quinones in the respiratory chain. The immediate electron acceptor for the enzyme in this species is believed to be ubiquinone. Couples the redox reaction to proton translocation (for every two electrons transferred, four hydrogen ions are translocated across the cytoplasmic membrane), and thus conserves the redox energy in a proton gradient. The polypeptide is NADH-quinone oxidoreductase subunit N 2 (Aquifex aeolicus (strain VF5)).